The primary structure comprises 224 residues: Stage II sporulation protein R (224 aa).

The protein is Stage II sporulation protein R (spoIIR) of Bacillus subtilis (strain 168).